A 306-amino-acid polypeptide reads, in one-letter code: Prophage bactoprenol glucosyl transferase homolog (306 aa).

At 1–227 (MKISLVVPVF…ITSFSTFPLR (227 aa)) the chain is on the cytoplasmic side. A helical membrane pass occupies residues 228–248 (IWTYIGLVVASVAFIYGAWMI). The Periplasmic portion of the chain corresponds to 249-262 (LDTIIFGNAVRGYP). The helical transmembrane segment at 263–283 (SLLVSILFLGGIQMIGIGVLG) threads the bilayer. The Cytoplasmic portion of the chain corresponds to 284–306 (EYIGRTYIETKKRPKYIIKRVKK).

This sequence belongs to the glycosyltransferase 2 family. GtrB subfamily.

Its subcellular location is the cell inner membrane. In terms of biological role, involved in O antigen modification. Catalyzes the transfer of the glucose residue from UDP-glucose to a lipid carrier. The chain is Prophage bactoprenol glucosyl transferase homolog (yfdH) from Escherichia coli (strain K12).